Here is a 118-residue protein sequence, read N- to C-terminus: Large ribosomal subunit protein bL20 (118 aa).

This sequence belongs to the bacterial ribosomal protein bL20 family.

Binds directly to 23S ribosomal RNA and is necessary for the in vitro assembly process of the 50S ribosomal subunit. It is not involved in the protein synthesizing functions of that subunit. The protein is Large ribosomal subunit protein bL20 of Sulfurihydrogenibium sp. (strain YO3AOP1).